The primary structure comprises 402 residues: MRSNYLFTSESVSEGHPDKVADQISDAIVDLFLSKDPEARIACETLTTTQLVVLAGEIRCKGVYEDGAWAPGAEEEIERTVRETVKAIGYEQDGFHWQTFRFENNLHGQSAHIAQGVDASGNKDEGAGDQGIMFGFACDETPDLMPATLYYSHKILETMAADRHSGAAPFLEPDTKSQVTLRFDGGKPVAATAIVVSTQHGKGYDEGAKEAELKAYVKKVVAGVLPADLLSDQTVYHINPTGSFEIGGPDGDAGLTGRKIIVDTYGGAAPHGGGAFSGKDPTKVDRSAAYVTRYLAKNIVAAGLARRCTIQLAYAIGVSEPLSLYVDTHGTGTVADDKIEAAIQGIKELGGLTPRGIRTHLGLNKPIYRKTAAYGHFGRKAEGDHFPWERTDLVDKLKAALA.

Residue His16 participates in ATP binding. Asp18 provides a ligand contact to Mg(2+). Position 44 (Glu44) interacts with K(+). L-methionine contacts are provided by Glu57 and Gln109. The segment at 109–119 (QSAHIAQGVDA) is flexible loop. Residues 174–176 (DTK), Asp252, 258–259 (RK), Ala275, and Lys279 each bind ATP. An L-methionine-binding site is contributed by Asp252. An L-methionine-binding site is contributed by Lys283.

This sequence belongs to the AdoMet synthase family. As to quaternary structure, homotetramer; dimer of dimers. It depends on Mg(2+) as a cofactor. Requires K(+) as cofactor.

Its subcellular location is the cytoplasm. The enzyme catalyses L-methionine + ATP + H2O = S-adenosyl-L-methionine + phosphate + diphosphate. Its pathway is amino-acid biosynthesis; S-adenosyl-L-methionine biosynthesis; S-adenosyl-L-methionine from L-methionine: step 1/1. In terms of biological role, catalyzes the formation of S-adenosylmethionine (AdoMet) from methionine and ATP. The overall synthetic reaction is composed of two sequential steps, AdoMet formation and the subsequent tripolyphosphate hydrolysis which occurs prior to release of AdoMet from the enzyme. The chain is S-adenosylmethionine synthase from Rhizorhabdus wittichii (strain DSM 6014 / CCUG 31198 / JCM 15750 / NBRC 105917 / EY 4224 / RW1) (Sphingomonas wittichii).